The primary structure comprises 155 residues: Interleukin-2 (155 aa).

Residues 1-20 form the signal peptide; sequence MYKMQLVACIALSLVLITNS. Residue Thr-23 is glycosylated (O-linked (GalNAc...) threonine). An intrachain disulfide couples Cys-77 to Cys-125.

The protein belongs to the IL-2 family.

The protein resides in the secreted. Functionally, cytokine produced by activated CD4-positive helper T-cells and to a lesser extend activated CD8-positive T-cells and natural killer (NK) cells that plays pivotal roles in the immune response and tolerance. Binds to a receptor complex composed of either the high-affinity trimeric IL-2R (IL2RA/CD25, IL2RB/CD122 and IL2RG/CD132) or the low-affinity dimeric IL-2R (IL2RB and IL2RG). Interaction with the receptor leads to oligomerization and conformation changes in the IL-2R subunits resulting in downstream signaling starting with phosphorylation of JAK1 and JAK3. In turn, JAK1 and JAK3 phosphorylate the receptor to form a docking site leading to the phosphorylation of several substrates including STAT5. This process leads to activation of several pathways including STAT, phosphoinositide-3-kinase/PI3K and mitogen-activated protein kinase/MAPK pathways. Functions as a T-cell growth factor and can increase NK-cell cytolytic activity as well. Promotes strong proliferation of activated B-cells and subsequently immunoglobulin production. Plays a pivotal role in regulating the adaptive immune system by controlling the survival and proliferation of regulatory T-cells, which are required for the maintenance of immune tolerance. Moreover, participates in the differentiation and homeostasis of effector T-cell subsets, including Th1, Th2, Th17 as well as memory CD8-positive T-cells. This is Interleukin-2 (IL2) from Dasypus novemcinctus (Nine-banded armadillo).